A 509-amino-acid chain; its full sequence is MKKPIIQLLLIFTIVSIVPFLLNTSYISLYTFVGVLWSITIVGISFVIFIENRSPQSTLAWFLVLALLPVVGVLLYSIFGRSRWRRKKHLHRSEEQRKLFREILEGRRLELSLKVPLSERSVHLTEVVQKFGGGPAADRTTTKLLTNGDQTFSEILQAIEQAKHHIHIQYYIYKSDEIGTKVRDALIKKAKDGVIVRFLYDGLGSNTLRRRFLQPMKEAGIEIVEFDPIFSAWLLETVNYRNHRKIVIVDGEIGFTGGLNVGDEYLGRSKKFPVWRDSHLKVEGKALYKLQAIFLEDWLYASSGLNTYSWDPFMNRQYFPGKEISNAEGAVQIVASGPSSDDKSIRNTLLAVMGSAKKSIWIATPYFIPDQETLTLLRLSAISGIDVRILYPGKSDSIISDQASQSYFTPLLKAGASIYSYKDGFMHAKILLVDDKIATIGTANMDVRSFELNYEIISVLYESETVHDIKRDFEDDFKHSTEIKWNAFQKRSIKKRILESFMRLISPLL.

The next 3 helical transmembrane spans lie at 4-24 (PIIQ…LLNT), 30-50 (YTFV…VIFI), and 59-79 (LAWF…YSIF). PLD phosphodiesterase domains are found at residues 238 to 265 (VNYR…GDEY) and 422 to 449 (KDGF…DVRS). Catalysis depends on residues H243, K245, D250, H427, K429, and D434.

The protein belongs to the phospholipase D family. Cardiolipin synthase subfamily.

The protein resides in the cell membrane. The enzyme catalyses 2 a 1,2-diacyl-sn-glycero-3-phospho-(1'-sn-glycerol) = a cardiolipin + glycerol. In terms of biological role, catalyzes the reversible phosphatidyl group transfer from one phosphatidylglycerol molecule to another to form cardiolipin (CL) (diphosphatidylglycerol) and glycerol. The polypeptide is Cardiolipin synthase 1 (cls1) (Bacillus anthracis).